A 258-amino-acid chain; its full sequence is Triosephosphate isomerase (258 aa).

9–11 (NWK) provides a ligand contact to substrate. Residue histidine 95 is the Electrophile of the active site. The active-site Proton acceptor is the glutamate 167. Substrate-binding residues include glycine 173 and serine 212.

The protein belongs to the triosephosphate isomerase family. In terms of assembly, homodimer.

It is found in the cytoplasm. The enzyme catalyses D-glyceraldehyde 3-phosphate = dihydroxyacetone phosphate. Its pathway is carbohydrate biosynthesis; gluconeogenesis. The protein operates within carbohydrate degradation; glycolysis; D-glyceraldehyde 3-phosphate from glycerone phosphate: step 1/1. In terms of biological role, involved in the gluconeogenesis. Catalyzes stereospecifically the conversion of dihydroxyacetone phosphate (DHAP) to D-glyceraldehyde-3-phosphate (G3P). The polypeptide is Triosephosphate isomerase (Blochmanniella pennsylvanica (strain BPEN)).